The primary structure comprises 229 residues: Somatolactin (229 aa).

The signal sequence occupies residues 1-21 (MAALQEVLLAVLLWPVLVTIS). Disulfide bonds link C26/C36, C87/C203, and C220/C228. Residue N143 is glycosylated (N-linked (GlcNAc...) asparagine).

It belongs to the somatotropin/prolactin family. In terms of tissue distribution, pituitary gland.

It localises to the secreted. The chain is Somatolactin from Tetraodon miurus (Congo puffer).